The primary structure comprises 120 residues: uncharacterized protein (120 aa).

The 92-residue stretch at 29–120 (QRQAAVLVPI…QVTPVVGIIP (92 aa)) folds into the Nudix hydrolase domain. Positions 67–89 (GAVDNSDATLIAAALREAQEEVA) match the Nudix box motif. Residues E83 and E87 each contribute to the Mg(2+) site.

It belongs to the Nudix hydrolase family. PCD1 subfamily. Requires Mn(2+) as cofactor. Mg(2+) is required as a cofactor.

Probably mediates the hydrolysis of some nucleoside diphosphate derivatives. This is an uncharacterized protein from Klebsiella aerogenes (Enterobacter aerogenes).